We begin with the raw amino-acid sequence, 860 residues long: Alanine--tRNA ligase (860 aa).

Zn(2+) is bound by residues His-563, His-567, Cys-665, and His-669.

It belongs to the class-II aminoacyl-tRNA synthetase family. Zn(2+) is required as a cofactor.

It is found in the cytoplasm. The catalysed reaction is tRNA(Ala) + L-alanine + ATP = L-alanyl-tRNA(Ala) + AMP + diphosphate. Catalyzes the attachment of alanine to tRNA(Ala) in a two-step reaction: alanine is first activated by ATP to form Ala-AMP and then transferred to the acceptor end of tRNA(Ala). Also edits incorrectly charged Ser-tRNA(Ala) and Gly-tRNA(Ala) via its editing domain. This Vibrio cholerae serotype O1 (strain ATCC 39315 / El Tor Inaba N16961) protein is Alanine--tRNA ligase.